Here is a 146-residue protein sequence, read N- to C-terminus: Antiholin-like protein LrgA (146 aa).

The next 4 membrane-spanning stretches (helical) occupy residues 7–29 (YGFLTQAFIFAVIMLVSNMIAAI), 34–53 (IPASVVGLVLLFLLLCLKVI), 65–87 (LTSLIGFLFVPSGISVMNSLGVM), and 97–119 (VILLATIILLGATGLFSQLILSL).

Belongs to the CidA/LrgA family. LrgA subfamily.

It localises to the cell membrane. Its function is as follows. Inhibits the expression or activity of extracellular murein hydrolases by interacting, possibly with LrgB, with the holin-like protein CidA. The LrgAB and CidA proteins may affect the proton motive force of the membrane. May be involved in programmed cell death (PCD), possibly triggering PCD in response to antibiotics and environmental stresses. The chain is Antiholin-like protein LrgA from Bacillus subtilis (strain 168).